A 363-amino-acid chain; its full sequence is 24-methylenesterol C-methyltransferase 2 (363 aa).

Residues 6–26 form a helical membrane-spanning segment; it reads MAWTAAGVGMALVYWFVWVMG.

This sequence belongs to the class I-like SAM-binding methyltransferase superfamily. Erg6/SMT family.

It localises to the membrane. It catalyses the reaction 24-methylidenelophenol + S-adenosyl-L-methionine = (Z)-24-ethylidenelophenol + S-adenosyl-L-homocysteine + H(+). It participates in steroid biosynthesis; sterol biosynthesis. Catalyzes the methyl transfer from S-adenosyl-methionine to the methylene group of 24-methylene lophenol to form 24-ethylidene lophenol. The polypeptide is 24-methylenesterol C-methyltransferase 2 (Smt2-1) (Oryza sativa subsp. japonica (Rice)).